Here is a 333-residue protein sequence, read N- to C-terminus: Minor fimbrium tip subunit MfA4 (333 aa).

A signal peptide spans 1-18; the sequence is MKKYLLYASLLTSVLLFS. Cys19 carries the N-palmitoyl cysteine lipid modification. The S-diacylglycerol cysteine moiety is linked to residue Cys19. Residues 19 to 53 constitute a propeptide that is removed on maturation; the sequence is CSKNNPSEPVEDRSIEISIRVDDFTKTGETVRYER.

This sequence belongs to the bacteroidetes fimbrillin superfamily. FimA/Mfa1 family. As to quaternary structure, component of the fimbrium tip. Minor fimbriae are composed of a structural subunit, most often Mfa1, and the accessory subunits Mfa3, Mfa4 and Mfa5. Mfa4 is required for Mfa3 and Mfa5 insertion into the fimbrium. Fimbrium assembly occurs by linear, head-to-tail oligomerization of fimbrial subunits. This is mediated via insertion of a C-terminal beta-strand from one subunit into a groove in the N-terminal domain of the following subunit.

The protein resides in the fimbrium. The protein localises to the cell outer membrane. Tip subunit of the minor fimbriae. These filamentous pili are attached to the cell surface; they mediate biofilm formation, adhesion onto host cells and onto other bacteria that are part of the oral microbiome. They play an important role in invasion of periodontal tissues and are recognized as major virulence factors. The sequence is that of Minor fimbrium tip subunit MfA4 from Porphyromonas gingivalis (strain ATCC 33277 / DSM 20709 / CIP 103683 / JCM 12257 / NCTC 11834 / 2561).